The primary structure comprises 1262 residues: Isoleucine--tRNA ligase, cytoplasmic (1262 aa).

M1 bears the N-acetylmethionine mark. The 'HIGH' region signature appears at 48–58 (PFATGLPHYGH). Residues 600-604 (KMSKR) carry the 'KMSKS' region motif. K603 lines the ATP pocket. S1049 is subject to Phosphoserine. T1058 carries the phosphothreonine modification.

Belongs to the class-I aminoacyl-tRNA synthetase family. In terms of assembly, part of a multisubunit complex that groups tRNA ligases for Arg (RARS1), Asp (DARS1), Gln (QARS1), Ile (IARS1), Leu (LARS1), Lys (KARS1), Met (MARS1) the bifunctional ligase for Glu and Pro (EPRS1) and the auxiliary subunits AIMP1/p43, AIMP2/p38 and EEF1E1/p18.

Its subcellular location is the cytoplasm. The protein localises to the cytosol. It carries out the reaction tRNA(Ile) + L-isoleucine + ATP = L-isoleucyl-tRNA(Ile) + AMP + diphosphate. In terms of biological role, catalyzes the specific attachment of an amino acid to its cognate tRNA in a 2 step reaction: the amino acid (AA) is first activated by ATP to form AA-AMP and then transferred to the acceptor end of the tRNA. This is Isoleucine--tRNA ligase, cytoplasmic (Iars1) from Mus musculus (Mouse).